The sequence spans 591 residues: Aspartate--tRNA ligase (591 aa).

An L-aspartate-binding site is contributed by glutamate 171. The interval 195 to 198 (QLFK) is aspartate. Residue arginine 217 coordinates L-aspartate. ATP contacts are provided by residues 217–219 (RDE) and glutamine 226. Position 448 (histidine 448) interacts with L-aspartate. ATP is bound at residue glutamate 482. Arginine 489 contributes to the L-aspartate binding site. 534–537 (GLDR) provides a ligand contact to ATP.

This sequence belongs to the class-II aminoacyl-tRNA synthetase family. Type 1 subfamily. Homodimer.

It localises to the cytoplasm. The enzyme catalyses tRNA(Asp) + L-aspartate + ATP = L-aspartyl-tRNA(Asp) + AMP + diphosphate. Catalyzes the attachment of L-aspartate to tRNA(Asp) in a two-step reaction: L-aspartate is first activated by ATP to form Asp-AMP and then transferred to the acceptor end of tRNA(Asp). The polypeptide is Aspartate--tRNA ligase (Vibrio cholerae serotype O1 (strain ATCC 39541 / Classical Ogawa 395 / O395)).